Consider the following 103-residue polypeptide: MLELLPLLFGYLIMFFGALGVVRFPDVYTRLHAATKCDTGGIMGIILGLSMIVNSWAIRTKLVILLIFIAMINPMISHAIARGAYKGGVKPKVKVDMYAWDNP.

This sequence belongs to the UPF0091 family.

This chain is UPF0091 protein PH0944, found in Pyrococcus horikoshii (strain ATCC 700860 / DSM 12428 / JCM 9974 / NBRC 100139 / OT-3).